Reading from the N-terminus, the 266-residue chain is ES1 protein homolog, mitochondrial (266 aa).

The transit peptide at 1 to 39 (MAAVRVLVSPRLASALLPLSGRHRTTSQRAAIHSSAPRP) directs the protein to the mitochondrion. N6-acetyllysine is present on residues Lys-149, Lys-155, and Lys-162. Lys-201 bears the N6-acetyllysine; alternate mark. Lys-201 is modified (N6-succinyllysine; alternate). Position 217 is an N6-acetyllysine (Lys-217). Residues Lys-221 and Lys-231 each carry the N6-acetyllysine; alternate modification. Residues Lys-221 and Lys-231 each carry the N6-succinyllysine; alternate modification.

Belongs to the ES1 family.

The protein localises to the mitochondrion. This is ES1 protein homolog, mitochondrial from Rattus norvegicus (Rat).